The chain runs to 193 residues: Probable gluconokinase (193 aa).

ATP is bound at residue 18-25; it reads GTAGTGKS.

Belongs to the gluconokinase GntK/GntV family.

The protein localises to the cytoplasm. The catalysed reaction is D-gluconate + ATP = 6-phospho-D-gluconate + ADP + H(+). Its pathway is carbohydrate acid metabolism; D-gluconate degradation. This chain is Probable gluconokinase, found in Saccharomyces cerevisiae (strain ATCC 204508 / S288c) (Baker's yeast).